The primary structure comprises 473 residues: Photosystem II CP43 reaction center protein (473 aa).

Residues 1 to 14 constitute a propeptide that is removed on maturation; the sequence is MKTLYSPRRFYPVE. Threonine 15 is modified (N-acetylthreonine). Threonine 15 bears the Phosphothreonine mark. The next 5 helical transmembrane spans lie at 69-93, 134-155, 178-200, 255-275, and 291-312; these read LFEV…PHLA, LLGP…KDRN, KALY…RKIS, KPFA…LSYS, and WFNN…ASQA. Glutamate 367 is a binding site for [CaMn4O5] cluster. A helical transmembrane segment spans residues 447–471; it reads RARAAAAGFEKGIDRDLEPVLFMTP.

The protein belongs to the PsbB/PsbC family. PsbC subfamily. As to quaternary structure, PSII is composed of 1 copy each of membrane proteins PsbA, PsbB, PsbC, PsbD, PsbE, PsbF, PsbH, PsbI, PsbJ, PsbK, PsbL, PsbM, PsbT, PsbX, PsbY, PsbZ, Psb30/Ycf12, at least 3 peripheral proteins of the oxygen-evolving complex and a large number of cofactors. It forms dimeric complexes. Binds multiple chlorophylls and provides some of the ligands for the Ca-4Mn-5O cluster of the oxygen-evolving complex. It may also provide a ligand for a Cl- that is required for oxygen evolution. PSII binds additional chlorophylls, carotenoids and specific lipids. serves as cofactor.

It is found in the plastid. The protein localises to the chloroplast thylakoid membrane. One of the components of the core complex of photosystem II (PSII). It binds chlorophyll and helps catalyze the primary light-induced photochemical processes of PSII. PSII is a light-driven water:plastoquinone oxidoreductase, using light energy to abstract electrons from H(2)O, generating O(2) and a proton gradient subsequently used for ATP formation. The polypeptide is Photosystem II CP43 reaction center protein (Ranunculus macranthus (Large buttercup)).